Here is a 1430-residue protein sequence, read N- to C-terminus: Nephrocystin-4 (1430 aa).

A sufficient for basal bodies localization region spans residues 824-1430 (MRMGNVGRPP…ETFCVKVRYE (607 aa)). A disordered region spans residues 828–857 (NVGRPPEKKLKRRETLPPSNSRIITMHDGR).

It belongs to the NPHP4 family.

The protein resides in the cytoplasm. It localises to the cytoskeleton. Its subcellular location is the cilium basal body. Involved in the organization of apical junctions. Required for building functional cilia. Involved in the organization of the subapical actin network in multiciliated epithelial cells. Seems to recruit int to basal bodies of motile cilia which subsequently interacts with actin-modifying proteins such as daam1. May down-regulate the canonical Wnt pathway and promote the Wnt-PCP pathway. Acts as a negative regulator of the hippo pathway. The polypeptide is Nephrocystin-4 (nphp4) (Xenopus laevis (African clawed frog)).